We begin with the raw amino-acid sequence, 208 residues long: Large ribosomal subunit protein uL3 (208 aa).

Positions 123-147 (RHGQSRGPMAHGSRYHRRPGSMGPV) are disordered.

This sequence belongs to the universal ribosomal protein uL3 family. Part of the 50S ribosomal subunit. Forms a cluster with proteins L14 and L19.

Its function is as follows. One of the primary rRNA binding proteins, it binds directly near the 3'-end of the 23S rRNA, where it nucleates assembly of the 50S subunit. The chain is Large ribosomal subunit protein uL3 from Streptococcus uberis (strain ATCC BAA-854 / 0140J).